Reading from the N-terminus, the 421-residue chain is Synaptotagmin-15 (421 aa).

At 1–4 (MAEQ) the chain is on the extracellular side. A helical; Signal-anchor for type III membrane protein transmembrane segment spans residues 5-29 (LALVIGGTIGGLLLLLLIGASCCLW). The Cytoplasmic segment spans residues 30 to 421 (RRFCATLTYE…WHALCRTTEP (392 aa)). A disordered region spans residues 47-68 (MATTAASSGQRDRPCQPHARTQ). C2 domains follow at residues 147 to 264 (CLGR…RRVI) and 278 to 399 (EFGD…EHWD).

The protein belongs to the synaptotagmin family. As to quaternary structure, homodimer.

The protein localises to the cell membrane. Its function is as follows. May be involved in the trafficking and exocytosis of secretory vesicles in non-neuronal tissues. The chain is Synaptotagmin-15 (SYT15) from Homo sapiens (Human).